A 914-amino-acid chain; its full sequence is Effector protein hopAE1 (914 aa).

Residues 1–13 (MMPSQITRSSHSS) are compositionally biased toward polar residues. Residues 1 to 31 (MMPSQITRSSHSSLPEVAPASGDAAGVSEQT) form a disordered region.

Belongs to the HopW family.

It is found in the secreted. This Pseudomonas syringae pv. syringae (strain B728a) protein is Effector protein hopAE1 (hopAE1).